The sequence spans 948 residues: Puromycin-sensitive aminopeptidase (948 aa).

Substrate is bound by residues Glu-206 and 341 to 345 (GAMEN). His-377 contributes to the Zn(2+) binding site. The active-site Proton acceptor is Glu-378. Zn(2+)-binding residues include His-381 and Glu-400.

The protein belongs to the peptidase M1 family. It depends on Zn(2+) as a cofactor. In terms of tissue distribution, expressed mainly in intestinal cells in the posterior part of the intestine and in amphid sensory neurons and nerve ring neurons. Expressed in neurons in the male tail. Expressed in mature spermatids (at protein level).

The protein resides in the cytoplasm. It localises to the cell cortex. The protein localises to the chromosome. Its subcellular location is the cytoskeleton. It is found in the spindle pole. It carries out the reaction Release of an N-terminal amino acid, preferentially alanine, from a wide range of peptides, amides and arylamides.. Its activity is regulated as follows. Inhibited by chelating agent 1,10-phenanthroline, aminopeptidase inhibitors actinonin, amastatin, and leuhistin, and to a lesser extent by puromycin. Its function is as follows. Aminopeptidase. Required for the exit from meiosis, probably upstream of cyclin cyb-3. Involved in the establishment of the anterior-posterior polarity at the embryonic 1-cell stage by regulating the dynamics of sperm-donated centrosomes. Plays a role in oocyte maturation. Required for embryonic development. The chain is Puromycin-sensitive aminopeptidase from Caenorhabditis elegans.